The primary structure comprises 282 residues: MSVRLSLPAPAKLNLFLHILGRRDDGYHELQTLFQFLDHGDELHFEARQDGQVRLHTEIAGVPHDSNLIVRAARGLQEASGSPQGVDIWLDKRLPMGGGIGGGSSDAATTLLALNHLWQLGWDEDRIAALGLRLGADVPVFTRGRAAFAEGVGEKLTPVDIPEPWYLVVVPQVLVSTAEIFSDPLLTRDSPAIKVRTVLEGDSRNDCQPVVERRYPEVRNALILLNKFVSARLTGTGGCVFGSFPNKAEADKVSALLPDHLQRFVAKGSNISMLHRKLETLV.

The active site involves Lys-12. 95-105 (PMGGGIGGGSS) is an ATP binding site. Residue Asp-137 is part of the active site.

It belongs to the GHMP kinase family. IspE subfamily.

The catalysed reaction is 4-CDP-2-C-methyl-D-erythritol + ATP = 4-CDP-2-C-methyl-D-erythritol 2-phosphate + ADP + H(+). Its pathway is isoprenoid biosynthesis; isopentenyl diphosphate biosynthesis via DXP pathway; isopentenyl diphosphate from 1-deoxy-D-xylulose 5-phosphate: step 3/6. Its function is as follows. Catalyzes the phosphorylation of the position 2 hydroxy group of 4-diphosphocytidyl-2C-methyl-D-erythritol. The polypeptide is 4-diphosphocytidyl-2-C-methyl-D-erythritol kinase (Pseudomonas aeruginosa (strain ATCC 15692 / DSM 22644 / CIP 104116 / JCM 14847 / LMG 12228 / 1C / PRS 101 / PAO1)).